A 244-amino-acid chain; its full sequence is Ureidoacrylate amidohydrolase RutB (244 aa).

Asp-38 acts as the Proton acceptor in catalysis. Residue Lys-147 is part of the active site. Cys-180 serves as the catalytic Nucleophile.

It belongs to the isochorismatase family. RutB subfamily.

The enzyme catalyses (Z)-3-ureidoacrylate + H2O + H(+) = (Z)-3-aminoacrylate + NH4(+) + CO2. It carries out the reaction (Z)-3-ureidoacrylate + H2O = (Z)-3-aminoacrylate + carbamate + H(+). The catalysed reaction is (Z)-2-methylureidoacrylate + H2O + H(+) = (Z)-2-methylaminoacrylate + NH4(+) + CO2. Its function is as follows. Hydrolyzes ureidoacrylate to form aminoacrylate and carbamate. The carbamate hydrolyzes spontaneously, thereby releasing one of the nitrogen atoms of the pyrimidine ring as ammonia and one of its carbon atoms as CO2. This chain is Ureidoacrylate amidohydrolase RutB, found in Shigella flexneri serotype X (strain 2002017).